The primary structure comprises 151 residues: Deoxyuridine 5'-triphosphate nucleotidohydrolase (151 aa).

Residues 70 to 72 (RSG), N83, 87 to 89 (LID), and M97 each bind substrate.

The protein belongs to the dUTPase family. Mg(2+) is required as a cofactor.

It carries out the reaction dUTP + H2O = dUMP + diphosphate + H(+). It participates in pyrimidine metabolism; dUMP biosynthesis; dUMP from dCTP (dUTP route): step 2/2. This enzyme is involved in nucleotide metabolism: it produces dUMP, the immediate precursor of thymidine nucleotides and it decreases the intracellular concentration of dUTP so that uracil cannot be incorporated into DNA. The protein is Deoxyuridine 5'-triphosphate nucleotidohydrolase of Yersinia enterocolitica serotype O:8 / biotype 1B (strain NCTC 13174 / 8081).